The chain runs to 417 residues: 1-deoxy-D-xylulose 5-phosphate reductoisomerase (417 aa).

Threonine 10, glycine 11, serine 12, isoleucine 13, glycine 36, arginine 37, asparagine 38, and asparagine 130 together coordinate NADPH. Lysine 131 contributes to the 1-deoxy-D-xylulose 5-phosphate binding site. Residue glutamate 132 coordinates NADPH. Residue aspartate 156 participates in Mn(2+) binding. 1-deoxy-D-xylulose 5-phosphate-binding residues include serine 157, glutamate 158, serine 194, and histidine 217. Mn(2+) is bound at residue glutamate 158. NADPH is bound at residue glycine 223. Serine 230, asparagine 235, lysine 236, and glutamate 239 together coordinate 1-deoxy-D-xylulose 5-phosphate. Position 239 (glutamate 239) interacts with Mn(2+).

Belongs to the DXR family. Mg(2+) serves as cofactor. It depends on Mn(2+) as a cofactor.

The enzyme catalyses 2-C-methyl-D-erythritol 4-phosphate + NADP(+) = 1-deoxy-D-xylulose 5-phosphate + NADPH + H(+). Its pathway is isoprenoid biosynthesis; isopentenyl diphosphate biosynthesis via DXP pathway; isopentenyl diphosphate from 1-deoxy-D-xylulose 5-phosphate: step 1/6. Functionally, catalyzes the NADPH-dependent rearrangement and reduction of 1-deoxy-D-xylulose-5-phosphate (DXP) to 2-C-methyl-D-erythritol 4-phosphate (MEP). In Synechococcus sp. (strain CC9902), this protein is 1-deoxy-D-xylulose 5-phosphate reductoisomerase.